Here is a 69-residue protein sequence, read N- to C-terminus: Large ribosomal subunit protein bL31 (69 aa).

Residues cysteine 16, cysteine 18, cysteine 37, and cysteine 40 each contribute to the Zn(2+) site.

The protein belongs to the bacterial ribosomal protein bL31 family. Type A subfamily. As to quaternary structure, part of the 50S ribosomal subunit. The cofactor is Zn(2+).

Binds the 23S rRNA. The chain is Large ribosomal subunit protein bL31 from Teredinibacter turnerae (strain ATCC 39867 / T7901).